The following is a 72-amino-acid chain: Male-specific sperm protein Mst84Dd (72 aa).

This sequence belongs to the MST(3)CGP family. As to expression, testis.

The chain is Male-specific sperm protein Mst84Dd (Mst84Dd) from Drosophila melanogaster (Fruit fly).